We begin with the raw amino-acid sequence, 431 residues long: MDFSRQSFHRSLSSSSQGPALSMSGSLYRKGTVQRLGAAPSVYGGAGGHGTRISVSKAVMSYGGDLSNGSDLFGGNGKLAMQNLNDRLANYLEKVRSLEQSNSRLEAQIKQWYETNAPSTIRDYSSYYAQIKELQNQVKDAQVQNAQCVLRIDNAKLAAEDFRLKFETERGMRIAVEADLQGLSKVYDNLTLQKTDLEIQIEELNKDLALLKKEHQEEVEVLRRQLGNNVNVEVDAAPGLNLGEIMNEMRQRYEVLAQKNLQEAKEQFERQSQTLQQQVTVNTEELKGFEVQVTELRRTYQNLEIELQSHLSMKESLERNLEDVKARYASQLAAIQEMLSSLEAQLMQIRSDTERQNQEHNILLDIKTRLEQEIATYRRLLEGEDIKTTEYQLSTLEMKDIKKTRKIKTVVEEVVDGKVVSSEVKEIEESV.

Residues 1-23 (MDFSRQSFHRSLSSSSQGPALSM) form a disordered region. The head stretch occupies residues 1–76 (MDFSRQSFHR…SNGSDLFGGN (76 aa)). A Phosphoserine; by MAPKAPK2, MAPKAPK3 and PKC modification is found at serine 13. Phosphoserine occurs at positions 16 and 26. The segment at 77–112 (GKLAMQNLNDRLANYLEKVRSLEQSNSRLEAQIKQW) is coil 1A. Residues 77–388 (GKLAMQNLND…RLLEGEDIKT (312 aa)) enclose the IF rod domain. Residues 113–130 (YETNAPSTIRDYSSYYAQ) are linker 1. A coil 1B region spans residues 131–222 (IKELQNQVKD…KEHQEEVEVL (92 aa)). Residues 223–245 (RRQLGNNVNVEVDAAPGLNLGEI) are linker 12. Residues 246–384 (MNEMRQRYEV…ATYRRLLEGE (139 aa)) form a coil 2 region. The tract at residues 385-431 (DIKTTEYQLSTLEMKDIKKTRKIKTVVEEVVDGKVVSSEVKEIEESV) is tail.

The protein belongs to the intermediate filament family. As to quaternary structure, heterotetramer of two type I and two type II keratins. Associates with KRT8. In terms of processing, hyperphosphorylation at Ser-13 occurs during the early stages of apoptosis but becomes less prominent during the later stages. Phosphorylation at Ser-13 also increases in response to stress brought on by cell injury. Proteolytically cleaved by caspases during apoptosis. Cleavage occurs at Asp-235. In terms of tissue distribution, expressed at low levels in the more differentiated suprabasal regions of the small intestine, and at higher levels in the colon, mainly in the upper region and in scattered cells throughout the remaining epithelium. Also expressed in epithelial cells of bladder, ileum and stomach and at lower levels in pancreas and earskin. The phosphorylated form is nearly exclusively expressed in goblet cells of the small intestine and in the lumen-proximal cells of the colon (at protein level). Also expressed in jejunum and duodenum.

Its function is as follows. Plays a significant role in maintaining keratin filament organization in intestinal epithelia. When phosphorylated, plays a role in the secretion of mucin in the small intestine. This chain is Keratin, type I cytoskeletal 20, found in Mus musculus (Mouse).